A 385-amino-acid chain; its full sequence is Digeranylgeranylglycerophospholipid reductase 2 (385 aa).

Residues alanine 13, glutamate 32, cysteine 43, alanine 44, glycine 46, arginine 95, alanine 119, aspartate 273, glycine 285, and isoleucine 286 each contribute to the FAD site.

It belongs to the geranylgeranyl reductase family. DGGGPL reductase subfamily. The cofactor is FAD.

The catalysed reaction is a 2,3-bis-O-phytanyl-sn-glycerol 1-phospholipid + 8 A = a 2,3-bis-O-(geranylgeranyl)-sn-glycerol 1-phospholipid + 8 AH2. It catalyses the reaction 2,3-bis-O-(phytanyl)-sn-glycerol 1-phosphate + 8 A = 2,3-bis-O-(geranylgeranyl)-sn-glycerol 1-phosphate + 8 AH2. The enzyme catalyses CDP-2,3-bis-O-(geranylgeranyl)-sn-glycerol + 8 AH2 = CDP-2,3-bis-O-(phytanyl)-sn-glycerol + 8 A. It carries out the reaction archaetidylserine + 8 AH2 = 2,3-bis-O-phytanyl-sn-glycero-3-phospho-L-serine + 8 A. Its pathway is membrane lipid metabolism; glycerophospholipid metabolism. Its function is as follows. Is involved in the reduction of 2,3-digeranylgeranylglycerophospholipids (unsaturated archaeols) into 2,3-diphytanylglycerophospholipids (saturated archaeols) in the biosynthesis of archaeal membrane lipids. Catalyzes the formation of archaetidic acid (2,3-di-O-phytanyl-sn-glyceryl phosphate) from 2,3-di-O-geranylgeranylglyceryl phosphate (DGGGP) via the hydrogenation of each double bond of the isoprenoid chains. Is also probably able to reduce double bonds of geranyl groups in CDP-2,3-bis-O-(geranylgeranyl)-sn-glycerol and archaetidylserine, thus acting at various stages in the biosynthesis of archaeal membrane lipids. This Methanothermobacter thermautotrophicus (strain ATCC 29096 / DSM 1053 / JCM 10044 / NBRC 100330 / Delta H) (Methanobacterium thermoautotrophicum) protein is Digeranylgeranylglycerophospholipid reductase 2.